The primary structure comprises 234 residues: Purine nucleoside phosphorylase DeoD-type (234 aa).

Residue histidine 4 coordinates a purine D-ribonucleoside. Residues glycine 20, arginine 24, arginine 43, and 87-90 (RVGT) each bind phosphate. A purine D-ribonucleoside is bound by residues glutamate 162, 178–180 (EME), and 202–203 (SD). The active-site Proton donor is the aspartate 203.

It belongs to the PNP/UDP phosphorylase family. As to quaternary structure, homohexamer; trimer of homodimers.

The enzyme catalyses a purine D-ribonucleoside + phosphate = a purine nucleobase + alpha-D-ribose 1-phosphate. It carries out the reaction a purine 2'-deoxy-D-ribonucleoside + phosphate = a purine nucleobase + 2-deoxy-alpha-D-ribose 1-phosphate. Catalyzes the reversible phosphorolytic breakdown of the N-glycosidic bond in the beta-(deoxy)ribonucleoside molecules, with the formation of the corresponding free purine bases and pentose-1-phosphate. This is Purine nucleoside phosphorylase DeoD-type from Anoxybacillus flavithermus (strain DSM 21510 / WK1).